A 280-amino-acid chain; its full sequence is Para-Rep C2 (280 aa).

Residues 1–97 form the CRESS-DNA virus Rep endonuclease domain; the sequence is MARRYCFTLN…ETLISEIGIP (97 aa). An RCR-1 motif is present at residues 6–9; sequence CFTL. 2 residues coordinate a divalent metal cation: Glu37 and His45. The RCR-2 motif lies at 45 to 47; sequence HLQ. A Nuclear localization signal motif is present at residues 54–75; sequence NKIRLGGLKKKFGNRAHWEIAR. Tyr84 acts as the For DNA cleavage activity in catalysis. Positions 84-87 match the RCR-3 motif; the sequence is YCCK. The Nuclear localization signal motif lies at 97-103; that stretch reads PVMKGSN. Residue 172 to 180 coordinates ATP; sequence GSDGGEGKT.

It belongs to the nanoviridea/circoviridae replication-associated protein family. As to quaternary structure, homooligomer (Potential). Rep binds to repeated DNA motifs (iterons). Mg(2+) is required as a cofactor. It depends on Mn(2+) as a cofactor.

The protein localises to the host nucleus. The catalysed reaction is ATP + H2O = ADP + phosphate + H(+). Initiates and terminates the replication only of its own subviral DNA molecule. The closed circular ssDNA genome is first converted to a superhelical dsDNA. Rep binds a specific hairpin at the genome origin of replication. Introduces an endonucleolytic nick within the intergenic region of the genome, thereby initiating the rolling circle replication (RCR). Following cleavage, binds covalently to the 5'-phosphate of DNA as a tyrosyl ester. The cleavage gives rise to a free 3'-OH that serves as a primer for the cellular DNA polymerase. The polymerase synthesizes the (+) strand DNA by rolling circle mechanism. After one round of replication, a Rep-catalyzed nucleotidyl transfer reaction releases a circular single-stranded virus genome, thereby terminating the replication. Displays origin-specific DNA cleavage, nucleotidyl transferase, ATPase and helicase activities. This is Para-Rep C2 (C2) from Subterranean clover stunt C2 alphasatellite (SCSC2A).